Here is a 470-residue protein sequence, read N- to C-terminus: MFKVARASQYLAITGAGIEDIKLSKKSWVFPWQSCTVFDVSPVNYTFKVQAMSAEKLPFVLPAVFTIGPRVDDDDALILYARLISPHDKDSNHVHELVEGVIEGETRVLAASMTMEEIFKGTKEFKKEVFDKVQLELNQFGLVIYNANVKQLVDVPGHEYFSYLGQKTQMEAANQARIDVSEAKMKGEIGAKERTGLTLQNAAKIDAESKIISMQRQGEGTKEEIKVRTEVKVFENQKEADVAKANAELAMKKAAWTKDAQVAEVEATKAVALREAELQTQVEKMNALTRTEKLKAEFLSKASVEYETKVQEANWELYNKQKQAEAVLYEKQKQAEAQKAQADAAFYSKQKEAEGLVALASAQGTYLRTLLDAVQNDYSCLRDFLMINNGIYQEIAKTNAMAVRDLQPKISVWNHGGEQGGGSGNAMKDIAGLYKMLPPVLDTVYEQTGMQPPAWIGTLRGAEPKQVTRS.

Cys-35 is lipidated: S-palmitoyl cysteine. Positions 305–354 form a coiled coil; the sequence is EYETKVQEANWELYNKQKQAEAVLYEKQKQAEAQKAQADAAFYSKQKEAE.

It belongs to the band 7/mec-2 family. Flotillin subfamily. May be palmitoylated.

Its subcellular location is the cell membrane. It is found in the membrane. The protein localises to the caveola. Its function is as follows. May act as a scaffolding protein within caveolar membranes, functionally participating in formation of caveolae or caveolae-like vesicles. This Arabidopsis thaliana (Mouse-ear cress) protein is Flotillin-like protein 1 (FLOT1).